A 2174-amino-acid polypeptide reads, in one-letter code: Mediator of RNA polymerase II transcription subunit 13 (2174 aa).

A Phosphoserine modification is found at serine 395. Residues 435 to 477 (RNAGQQGQAPSLGQQQQILPKHKTNEKQEKSEKPQKRPLTPFH) are disordered. Over residues 438-451 (GQQGQAPSLGQQQQ) the composition is skewed to low complexity. Basic and acidic residues predominate over residues 457 to 469 (KTNEKQEKSEKPQ). Serine 500, serine 504, serine 530, and serine 537 each carry phosphoserine. A compositionally biased stretch (basic and acidic residues) spans 709-730 (FPDKKDRQNSEREAGKKHKVED). 3 disordered regions span residues 709–735 (FPDK…TSSV), 749–769 (SPSI…PSTS), and 787–816 (FNSD…ESKT). The segment covering 805-815 (SDDKASCKESK) has biased composition (basic and acidic residues). Residues serine 826 and serine 890 each carry the phosphoserine modification. Residues 959–1054 (FIKEGDGSNM…ASTPSTCRPL (96 aa)) form a disordered region. Over residues 992 to 1003 (PPSNSGAGILPS) the composition is skewed to low complexity. Residues 1004-1015 (PSTPRFPTPRTP) are compositionally biased toward pro residues. Phosphoserine is present on serine 1029. Over residues 1040–1053 (DLYSPASTPSTCRP) the composition is skewed to polar residues. 2 consecutive short sequence motifs (LXXLL motif) follow at residues 1188–1192 (LILLL) and 1279–1283 (LRMLL). Polar residues-rich tracts occupy residues 1484-1498 (SQSL…NTGN) and 1563-1606 (SMNS…SLPT). Disordered stretches follow at residues 1484–1505 (SQSL…PSAT), 1557–1617 (SFPP…ESTM), and 2015–2048 (LPAS…RLLS).

Belongs to the Mediator complex subunit 13 family. As to quaternary structure, component of the Mediator complex, which is composed of MED1, MED4, MED6, MED7, MED8, MED9, MED10, MED11, MED12, MED13, MED13L, MED14, MED15, MED16, MED17, MED18, MED19, MED20, MED21, MED22, MED23, MED24, MED25, MED26, MED27, MED29, MED30, MED31, CCNC, CDK8 and CDC2L6/CDK11. The MED12, MED13, CCNC and CDK8 subunits form a distinct module termed the CDK8 module. Mediator containing the CDK8 module is less active than Mediator lacking this module in supporting transcriptional activation. Individual preparations of the Mediator complex lacking one or more distinct subunits have been variously termed ARC, CRSP, DRIP, PC2, SMCC and TRAP. In terms of tissue distribution, ubiquitous.

Its subcellular location is the nucleus. Component of the Mediator complex, a coactivator involved in the regulated transcription of nearly all RNA polymerase II-dependent genes. Mediator functions as a bridge to convey information from gene-specific regulatory proteins to the basal RNA polymerase II transcription machinery. Mediator is recruited to promoters by direct interactions with regulatory proteins and serves as a scaffold for the assembly of a functional preinitiation complex with RNA polymerase II and the general transcription factors. The sequence is that of Mediator of RNA polymerase II transcription subunit 13 from Homo sapiens (Human).